Here is a 458-residue protein sequence, read N- to C-terminus: Argininosuccinate lyase (458 aa).

This sequence belongs to the lyase 1 family. Argininosuccinate lyase subfamily.

It is found in the cytoplasm. It catalyses the reaction 2-(N(omega)-L-arginino)succinate = fumarate + L-arginine. It participates in amino-acid biosynthesis; L-arginine biosynthesis; L-arginine from L-ornithine and carbamoyl phosphate: step 3/3. The polypeptide is Argininosuccinate lyase (Vibrio cholerae serotype O1 (strain ATCC 39541 / Classical Ogawa 395 / O395)).